Reading from the N-terminus, the 319-residue chain is Cobalamin biosynthesis protein CbiB (319 aa).

Transmembrane regions (helical) follow at residues 56 to 76 (VMWV…LALA), 82 to 102 (WFGW…RSLA), 153 to 173 (VDGI…LAMA), 204 to 224 (VANY…AGLC), and 296 to 316 (LMWV…CGLS).

It belongs to the CobD/CbiB family.

It is found in the cell membrane. It participates in cofactor biosynthesis; adenosylcobalamin biosynthesis. Functionally, converts cobyric acid to cobinamide by the addition of aminopropanol on the F carboxylic group. However, the true cosubstrate could be (R)-1-amino-2-propanol O-2-phosphate, leading to cobinamide phosphate. In Salmonella choleraesuis (strain SC-B67), this protein is Cobalamin biosynthesis protein CbiB.